The following is a 503-amino-acid chain: ATP synthase subunit alpha, chloroplastic (503 aa).

170–177 (GDRQTGKT) is an ATP binding site.

The protein belongs to the ATPase alpha/beta chains family. In terms of assembly, F-type ATPases have 2 components, CF(1) - the catalytic core - and CF(0) - the membrane proton channel. CF(1) has five subunits: alpha(3), beta(3), gamma(1), delta(1), epsilon(1). CF(0) has four main subunits: a, b, b' and c.

Its subcellular location is the plastid. The protein localises to the chloroplast thylakoid membrane. The catalysed reaction is ATP + H2O + 4 H(+)(in) = ADP + phosphate + 5 H(+)(out). In terms of biological role, produces ATP from ADP in the presence of a proton gradient across the membrane. The alpha chain is a regulatory subunit. In Thalassiosira pseudonana (Marine diatom), this protein is ATP synthase subunit alpha, chloroplastic.